We begin with the raw amino-acid sequence, 833 residues long: Coiled-coil domain-containing protein 110 (833 aa).

Positions 431 to 778 (LQNYLKESVQ…REYLNLSDKI (348 aa)) form a coiled coil.

Its subcellular location is the nucleus. This Macaca fascicularis (Crab-eating macaque) protein is Coiled-coil domain-containing protein 110 (CCDC110).